Reading from the N-terminus, the 230-residue chain is Claudin-2 (230 aa).

The Cytoplasmic segment spans residues 1–7 (MASLGVQ). The chain crosses the membrane as a helical span at residues 8–28 (LVGYILGLLGLLGTSIAMLLP). The Extracellular segment spans residues 29 to 81 (NWRTSSYVGASIVTAVGFSKGLWMECATHSTGITQCDIYSTLLGLPADIQAAQ). The cysteines at positions 54 and 64 are disulfide-linked. The helical transmembrane segment at 82-102 (AMMVTSSAMSSLACIISVVGM) threads the bilayer. The Cytoplasmic segment spans residues 103-116 (RCTVFCQDSRAKDR). A helical transmembrane segment spans residues 117 to 137 (VAVVGGVFFILGGILGFIPVA). Residues 138–162 (WNLHGILRDFYSPLVPDSMKFEIGE) are Extracellular-facing. The helical transmembrane segment at 163–183 (ALYLGIISALFSLVAGVILCF) threads the bilayer. At 184–230 (SCSPQGNRTNYYDGYQAQPLATRSSPRSAQQPKAKSEFNSYSLTGYV) the chain is on the cytoplasmic side. Positions 205–230 (TRSSPRSAQQPKAKSEFNSYSLTGYV) are disordered. Residue K218 forms a Glycyl lysine isopeptide (Lys-Gly) (interchain with G-Cter in SUMO) linkage. Phosphoserine is present on residues S219 and S223. The segment at 229 to 230 (YV) is interactions with TJP1, TJP2 and TJP3.

It belongs to the claudin family. As to quaternary structure, can form homo- and heteropolymers with other claudins to mediate paracellular barrier and channel functions of tight junctions in response to physiological stimuli. Homopolymers interact with CLDN3, but not CLDN1, homopolymers. Directly interacts with TJP1/ZO-1, TJP2/ZO-2 and TJP3/ZO-3. The disulfide bond is necessary for pore formation, but is not required for correct protein trafficking. In terms of tissue distribution, expressed in the kidney, liver and intestine, with higher levels in the ileum than in the jejunum. Low levels in the brain. Expressed in colonic epithelium (at protein level). Expressed in the perivenous regions, bile ducts, and gallbladder epithelium (at protein level).

The protein localises to the cell junction. It is found in the tight junction. Its subcellular location is the cell membrane. It carries out the reaction Na(+)(in) = Na(+)(out). It catalyses the reaction K(+)(in) = K(+)(out). The enzyme catalyses Rb(+)(in) = Rb(+)(out). The catalysed reaction is Li(+)(in) = Li(+)(out). It carries out the reaction Cs(+)(in) = Cs(+)(out). It catalyses the reaction Ca(2+)(in) = Ca(2+)(out). The enzyme catalyses methylamine(out) = methylamine(in). The catalysed reaction is choline(out) = choline(in). It carries out the reaction H2O(in) = H2O(out). Its activity is regulated as follows. The channel permeability is down-regulated at acidic pH. Forms paracellular channels: polymerizes in tight junction strands with cation- and water-selective channels through the strands, conveying epithelial permeability in a process known as paracellular tight junction permeability. In intestinal epithelium, allows for sodium and water fluxes from the peritoneal side to the lumen of the intestine to regulate nutrient absorption and clear enteric pathogens as part of mucosal immune response. In kidney, allows passive sodium and calcium reabsorption across proximal tubules from the lumen back to the bloodstream. In the hepatobiliary tract, allows paracellular water and cation fluxes in the hepatic perivenous areas and biliary epithelium to generate bile flow and maintain osmotic gradients. The protein is Claudin-2 of Mus musculus (Mouse).